The primary structure comprises 111 residues: Resistin-like alpha (111 aa).

The signal sequence occupies residues 1 to 23 (MKTATCSLLICVFLLQLMVPVNT). 5 cysteine pairs are disulfide-bonded: cysteine 55-cysteine 108, cysteine 67-cysteine 107, cysteine 76-cysteine 93, cysteine 78-cysteine 95, and cysteine 82-cysteine 97.

It belongs to the resistin/FIZZ family. As to quaternary structure, monomer. As to expression, highest levels in adipose tissue.

The protein resides in the secreted. In terms of biological role, probable hormone. Plays a role in pulmonary vascular remodeling. This is Resistin-like alpha (Retnla) from Rattus norvegicus (Rat).